Reading from the N-terminus, the 611-residue chain is UvrABC system protein C (611 aa).

The GIY-YIG domain maps to 14–91 (TSPGCYIHKD…IKENKPKYNI (78 aa)). The UVR domain maps to 196 to 231 (DQIIEDLRGKMAGAAQTMEFEKAAEYRDLIQSIGTL).

The protein belongs to the UvrC family. Interacts with UvrB in an incision complex.

It localises to the cytoplasm. Its function is as follows. The UvrABC repair system catalyzes the recognition and processing of DNA lesions. UvrC both incises the 5' and 3' sides of the lesion. The N-terminal half is responsible for the 3' incision and the C-terminal half is responsible for the 5' incision. In Streptococcus gordonii (strain Challis / ATCC 35105 / BCRC 15272 / CH1 / DL1 / V288), this protein is UvrABC system protein C.